The primary structure comprises 350 residues: FAD:protein FMN transferase (350 aa).

The first 19 residues, 1-19, serve as a signal peptide directing secretion; sequence MKMTFCRAVCLAAAFLLMG. Residue Cys-20 is the site of N-palmitoyl cysteine attachment. Residue Cys-20 is the site of S-diacylglycerol cysteine attachment. FAD is bound by residues Met-41, Tyr-78, 119–121, and Asp-181; that span reads AMD. A Mg(2+)-binding site is contributed by Thr-184. FAD is bound by residues Glu-187 and Ile-272. Mg(2+)-binding residues include Asp-298, Asp-301, and Thr-302.

Belongs to the ApbE family. As to quaternary structure, homodimer. Mg(2+) serves as cofactor.

The protein resides in the cell inner membrane. It catalyses the reaction L-threonyl-[protein] + FAD = FMN-L-threonyl-[protein] + AMP + H(+). Functionally, flavin transferase that catalyzes the transfer of the FMN moiety of FAD and its covalent binding to the hydroxyl group of a threonine residue in a target flavoprotein such as NqrB and NqrC, two subunits of the NQR complex. This is FAD:protein FMN transferase from Salmonella typhimurium (strain LT2 / SGSC1412 / ATCC 700720).